Consider the following 434-residue polypeptide: Tryptophan--tRNA ligase (434 aa).

Residues 14 to 16 (TTS) and 22 to 23 (GN) contribute to the ATP site. The short motif at 15–23 (TSGTPHLGN) is the 'HIGH' region element. Asp-147 provides a ligand contact to L-tryptophan. ATP is bound by residues 159–161 (GRD), Leu-199, and 206–210 (KMSKS). The 'KMSKS' region signature appears at 206 to 210 (KMSKS).

Belongs to the class-I aminoacyl-tRNA synthetase family. In terms of assembly, homodimer.

It localises to the cytoplasm. The catalysed reaction is tRNA(Trp) + L-tryptophan + ATP = L-tryptophyl-tRNA(Trp) + AMP + diphosphate + H(+). In terms of biological role, catalyzes the attachment of tryptophan to tRNA(Trp). The polypeptide is Tryptophan--tRNA ligase (Xylella fastidiosa (strain 9a5c)).